Reading from the N-terminus, the 686-residue chain is MRLLTLLGLLCGSVATPLGPKWPEPVFGRLASPGFPGEYANDQERRWTLTAPPGYRLRLYFTHFDLELSHLCEYDFVKLSSGAKVLATLCGQESTDTERAPGKDTFYSLGSSLDITFRSDYSNEKPFTGFEAFYAAEDIDECQVAPGEAPTCDHHCHNHLGGFYCSCRAGYVLHRNKRTCSALCSGQVFTQRSGELSSPEYPRPYPKLSSCTYSISLEEGFSVILDFVESFDVETHPETLCPYDFLKIQTDREEHGPFCGKTLPHRIETKSNTVTITFVTDESGDHTGWKIHYTSTAQPCPYPMAPPNGHVSPVQAKYILKDSFSIFCETGYELLQGHLPLKSFTAVCQKDGSWDRPMPACSIVDCGPPDDLPSGRVEYITGPGVTTYKAVIQYSCEETFYTMKVNDGKYVCEADGFWTSSKGEKSLPVCEPVCGLSARTTGGRIYGGQKAKPGDFPWQVLILGGTTAAGALLYDNWVLTAAHAVYEQKHDASALDIRMGTLKRLSPHYTQAWSEAVFIHEGYTHDAGFDNDIALIKLNNKVVINSNITPICLPRKEAESFMRTDDIGTASGWGLTQRGFLARNLMYVDIPIVDHQKCTAAYEKPPYPRGSVTANMLCAGLESGGKDSCRGDSGGALVFLDSETERWFVGGIVSWGSMNCGEAGQYGVYTKVINYIPWIENIISDF.

The N-terminal stretch at 1–15 (MRLLTLLGLLCGSVA) is a signal peptide. The CUB 1 domain maps to 16 to 137 (TPLGPKWPEP…TGFEAFYAAE (122 aa)). 8 residues coordinate Ca(2+): glutamate 67, aspartate 75, aspartate 120, serine 122, asparagine 123, aspartate 138, isoleucine 139, and glutamate 141. Cysteine 72 and cysteine 90 are disulfide-bonded. An EGF-like; calcium-binding domain is found at 138–181 (DIDECQVAPGEAPTCDHHCHNHLGGFYCSCRAGYVLHRNKRTCS). Cystine bridges form between cysteine 142/cysteine 156, cysteine 152/cysteine 165, cysteine 167/cysteine 180, cysteine 184/cysteine 211, cysteine 241/cysteine 259, cysteine 300/cysteine 348, cysteine 328/cysteine 361, cysteine 366/cysteine 412, cysteine 396/cysteine 430, cysteine 434/cysteine 552, cysteine 598/cysteine 618, and cysteine 629/cysteine 660. Ca(2+) is bound by residues asparagine 158, histidine 159, and glycine 162. Asparagine 158 carries the post-translational modification (3R)-3-hydroxyasparagine. Residues 184–296 (CSGQVFTQRS…TGWKIHYTST (113 aa)) enclose the CUB 2 domain. 2 consecutive Sushi domains span residues 298–363 (QPCP…ACSI) and 364–432 (VDCG…VCEP). The region spanning 445-684 (IYGGQKAKPG…YIPWIENIIS (240 aa)) is the Peptidase S1 domain. Catalysis depends on charge relay system residues histidine 483 and aspartate 532. Serine 633 (charge relay system) is an active-site residue.

The protein belongs to the peptidase S1 family. Homodimer; disulfide-linked. Binds MBL2. Isoform 2 binds to MASP1. Binds SERPING1. Dimerization and MBL2 binding requires calcium ions. Post-translationally, the iron and 2-oxoglutarate dependent 3-hydroxylation of aspartate and asparagine is (R) stereospecific within EGF domains. In terms of processing, activated by cleavage after Arg-444. The uncleaved zymogen is inactive towards synthetic substrates, but has sufficient activity to effect autocatalytic cleavage. In terms of tissue distribution, plasma.

Its subcellular location is the secreted. The enzyme catalyses Selective cleavage after Arg-223 in complement component C2 (-Ser-Leu-Gly-Arg-|-Lys-Ile-Gln-Ile) and after Arg-76 in complement component C4 (-Gly-Leu-Gln-Arg-|-Ala-Leu-Glu-Ile).. Functionally, serum protease that plays an important role in the activation of the complement system via mannose-binding lectin. After activation by auto-catalytic cleavage it cleaves C2 and C4, leading to their activation and to the formation of C3 convertase. This chain is Mannan-binding lectin serine protease 2 (MASP2), found in Homo sapiens (Human).